The primary structure comprises 1624 residues: Putative serine/threonine-protein kinase/receptor R831 (1624 aa).

A signal peptide spans 1-25 (MHSVYTKYTIILILLVIYQGLPTNT). N-linked (GlcNAc...) asparagine; by host glycans are attached at residues asparagine 152, asparagine 169, asparagine 200, asparagine 205, asparagine 225, asparagine 240, asparagine 245, asparagine 292, asparagine 364, asparagine 479, asparagine 541, asparagine 720, and asparagine 737. A helical transmembrane segment spans residues 747–767 (VIPIACIFGLLLLTLLIVIIF). Residues 786–1049 (LEIGETLGTG…EIMTRLSNIL (264 aa)) form the Protein kinase 1 domain. Residues 792–800 (LGTGGYGEV) and lysine 813 contribute to the ATP site. The Proton acceptor role is filled by aspartate 908. Residues 1054–1093 (NMTSGTSSSSLSSGGIGKSITDSKSSNSRSSVESSNTSNT) show a composition bias toward low complexity. Residues 1054–1101 (NMTSGTSSSSLSSGGIGKSITDSKSSNSRSSVESSNTSNTFRGIDRHN) are disordered. The Guanylate cyclase domain occupies 1109 to 1252 (TVAFIDIISA…STVNITGKIT (144 aa)). The region spanning 1364-1615 (ISIGKQIGLG…MTEVVQQLML (252 aa)) is the Protein kinase 2 domain. ATP contacts are provided by residues 1370-1378 (IGLGSYGIV) and lysine 1391. The active-site Proton acceptor is the aspartate 1487.

Its subcellular location is the membrane. The catalysed reaction is L-seryl-[protein] + ATP = O-phospho-L-seryl-[protein] + ADP + H(+). The enzyme catalyses L-threonyl-[protein] + ATP = O-phospho-L-threonyl-[protein] + ADP + H(+). The sequence is that of Putative serine/threonine-protein kinase/receptor R831 from Acanthamoeba polyphaga (Amoeba).